Consider the following 714-residue polypeptide: WD repeat and coiled-coil-containing protein (714 aa).

WD repeat units lie at residues 55-98 (GQFE…LEQN) and 154-194 (KGSG…LVPC). Disordered stretches follow at residues 432–454 (EEST…SENF) and 531–564 (QASR…KEKN). The stretch at 567-595 (QLTQNMERIFTRFAEVQQCLSEIREFTQN) forms a coiled coil. Residues 685–714 (RSARRKSPARPPSGADDFPPESPKSPSMEK) are disordered.

The chain is WD repeat and coiled-coil-containing protein (wdcp) from Danio rerio (Zebrafish).